The sequence spans 139 residues: D-ribose pyranase (139 aa).

Residue H20 is the Proton donor of the active site. Substrate-binding positions include D28, H106, and 128-130; that span reads YAN.

It belongs to the RbsD / FucU family. RbsD subfamily. In terms of assembly, homodecamer.

The protein localises to the cytoplasm. It carries out the reaction beta-D-ribopyranose = beta-D-ribofuranose. It functions in the pathway carbohydrate metabolism; D-ribose degradation; D-ribose 5-phosphate from beta-D-ribopyranose: step 1/2. In terms of biological role, catalyzes the interconversion of beta-pyran and beta-furan forms of D-ribose. The protein is D-ribose pyranase of Cronobacter sakazakii (strain ATCC BAA-894) (Enterobacter sakazakii).